The sequence spans 653 residues: Dual specificity protein kinase shkB (653 aa).

A disordered region spans residues 112–133 (NPNNNNNNSNNTNSSDSNQNYS). The Protein kinase domain occupies 174–432 (YNREAKLGSG…FAEISKQRIL (259 aa)). ATP is bound by residues 180–188 (LGSGAFGSV) and Lys201. The active-site Proton acceptor is Asp298. Residues 534 to 625 (GFMAATSSKN…IKEPFEGGPF (92 aa)) form the SH2 domain.

This sequence belongs to the protein kinase superfamily. TKL Ser/Thr protein kinase family. SH2 domain-containing protein kinase subfamily.

It localises to the membrane. The catalysed reaction is L-seryl-[protein] + ATP = O-phospho-L-seryl-[protein] + ADP + H(+). It catalyses the reaction L-threonyl-[protein] + ATP = O-phospho-L-threonyl-[protein] + ADP + H(+). Required for proper chemotaxis and phagocytosis; proper spatiotemporal control of F-actin levels in chemotaxing cells. Negative regulator of the PI3K (phosphatidylinositol 3 kinase) pathway. Predominantly phosphorylates serines and threonines and tyrosines at a lower level. In Dictyostelium discoideum (Social amoeba), this protein is Dual specificity protein kinase shkB (shkB).